A 46-amino-acid chain; its full sequence is DNA-directed RNA polymerase subunit Rpo12 (46 aa).

C9, C24, and C27 together coordinate Zn(2+).

Belongs to the archaeal Rpo12/eukaryotic RPC10 RNA polymerase subunit family. Part of the RNA polymerase complex. Interacts with Rpo3. Forms an Rpo3-Rpo10-Rpo11-Rpo12 complex upon coexpression. The cofactor is Zn(2+).

The protein resides in the cytoplasm. It catalyses the reaction RNA(n) + a ribonucleoside 5'-triphosphate = RNA(n+1) + diphosphate. In terms of biological role, DNA-dependent RNA polymerase (RNAP) catalyzes the transcription of DNA into RNA using the four ribonucleoside triphosphates as substrates. This Methanocaldococcus jannaschii (strain ATCC 43067 / DSM 2661 / JAL-1 / JCM 10045 / NBRC 100440) (Methanococcus jannaschii) protein is DNA-directed RNA polymerase subunit Rpo12.